We begin with the raw amino-acid sequence, 539 residues long: CTP synthase (539 aa).

The tract at residues 1–272 (MTLRSKMTKY…AQIILSHFKI (272 aa)) is amidoligase domain. Serine 19 lines the CTP pocket. Serine 19 contributes to the UTP binding site. 20-25 (GLGKGV) serves as a coordination point for ATP. Tyrosine 60 contacts L-glutamine. An ATP-binding site is contributed by aspartate 77. Residues aspartate 77 and glutamate 147 each contribute to the Mg(2+) site. CTP contacts are provided by residues 154–156 (DIE), 193–198 (KSKPTQ), and lysine 229. Residues 193–198 (KSKPTQ) and lysine 229 contribute to the UTP site. The 242-residue stretch at 298 to 539 (KILMVGKYVE…SFLRVLIKNN (242 aa)) folds into the Glutamine amidotransferase type-1 domain. Glycine 360 contacts L-glutamine. Catalysis depends on cysteine 387, which acts as the Nucleophile; for glutamine hydrolysis. Residues 388–391 (LGFQ), glutamate 410, and arginine 469 contribute to the L-glutamine site. Residues histidine 514 and glutamate 516 contribute to the active site.

It belongs to the CTP synthase family. As to quaternary structure, homotetramer.

It carries out the reaction UTP + L-glutamine + ATP + H2O = CTP + L-glutamate + ADP + phosphate + 2 H(+). The enzyme catalyses L-glutamine + H2O = L-glutamate + NH4(+). It catalyses the reaction UTP + NH4(+) + ATP = CTP + ADP + phosphate + 2 H(+). Its pathway is pyrimidine metabolism; CTP biosynthesis via de novo pathway; CTP from UDP: step 2/2. Allosterically activated by GTP, when glutamine is the substrate; GTP has no effect on the reaction when ammonia is the substrate. The allosteric effector GTP functions by stabilizing the protein conformation that binds the tetrahedral intermediate(s) formed during glutamine hydrolysis. Inhibited by the product CTP, via allosteric rather than competitive inhibition. In terms of biological role, catalyzes the ATP-dependent amination of UTP to CTP with either L-glutamine or ammonia as the source of nitrogen. Regulates intracellular CTP levels through interactions with the four ribonucleotide triphosphates. In Mycoplasmopsis pulmonis (strain UAB CTIP) (Mycoplasma pulmonis), this protein is CTP synthase.